The primary structure comprises 21 residues: 23S rRNA methylase leader peptide (21 aa).

Functionally, involved in erythromycin resistance. The sequence is that of 23S rRNA methylase leader peptide from Corynebacterium diphtheriae.